The following is a 207-amino-acid chain: Thiamine-phosphate synthase (207 aa).

Residues 36-40 and Asn-68 each bind 4-amino-2-methyl-5-(diphosphooxymethyl)pyrimidine; that span reads QLRMK. Mg(2+) contacts are provided by Asp-69 and Asp-88. Ser-106 is a 4-amino-2-methyl-5-(diphosphooxymethyl)pyrimidine binding site. Residue 132-134 participates in 2-[(2R,5Z)-2-carboxy-4-methylthiazol-5(2H)-ylidene]ethyl phosphate binding; sequence TNT. A 4-amino-2-methyl-5-(diphosphooxymethyl)pyrimidine-binding site is contributed by Lys-135. Residues Gly-162 and 182–183 each bind 2-[(2R,5Z)-2-carboxy-4-methylthiazol-5(2H)-ylidene]ethyl phosphate; that span reads VS.

It belongs to the thiamine-phosphate synthase family. Mg(2+) serves as cofactor.

The enzyme catalyses 2-[(2R,5Z)-2-carboxy-4-methylthiazol-5(2H)-ylidene]ethyl phosphate + 4-amino-2-methyl-5-(diphosphooxymethyl)pyrimidine + 2 H(+) = thiamine phosphate + CO2 + diphosphate. The catalysed reaction is 2-(2-carboxy-4-methylthiazol-5-yl)ethyl phosphate + 4-amino-2-methyl-5-(diphosphooxymethyl)pyrimidine + 2 H(+) = thiamine phosphate + CO2 + diphosphate. It carries out the reaction 4-methyl-5-(2-phosphooxyethyl)-thiazole + 4-amino-2-methyl-5-(diphosphooxymethyl)pyrimidine + H(+) = thiamine phosphate + diphosphate. The protein operates within cofactor biosynthesis; thiamine diphosphate biosynthesis; thiamine phosphate from 4-amino-2-methyl-5-diphosphomethylpyrimidine and 4-methyl-5-(2-phosphoethyl)-thiazole: step 1/1. Its function is as follows. Condenses 4-methyl-5-(beta-hydroxyethyl)thiazole monophosphate (THZ-P) and 2-methyl-4-amino-5-hydroxymethyl pyrimidine pyrophosphate (HMP-PP) to form thiamine monophosphate (TMP). This chain is Thiamine-phosphate synthase, found in Methanococcus maripaludis (strain DSM 14266 / JCM 13030 / NBRC 101832 / S2 / LL).